A 782-amino-acid chain; its full sequence is Lysosome membrane protein 2-C (782 aa).

Over Met-1–Gly-7 the chain is Cytoplasmic. Residues Leu-8–Ala-28 form a helical membrane-spanning segment. Over Leu-29 to Lys-739 the chain is Lumenal. 22 N-linked (GlcNAc...) asparagine glycosylation sites follow: Asn-77, Asn-105, Asn-191, Asn-219, Asn-234, Asn-243, Asn-281, Asn-368, Asn-387, Asn-401, Asn-427, Asn-432, Asn-451, Asn-465, Asn-501, Asn-536, Asn-540, Asn-595, Asn-605, Asn-613, Asn-646, and Asn-692. Residues Ile-740–Met-760 form a helical membrane-spanning segment. Over Ala-761 to Asn-782 the chain is Cytoplasmic. The short motif at Gly-777–Ile-781 is the Tyrosine-type lysosomal sorting signal element.

Belongs to the CD36 family. Post-translationally, heavily glycosylated.

The protein localises to the lysosome membrane. May act as a lysosomal receptor. May be involved role in macropinocytosis and fluid phase exocytosis. This Dictyostelium discoideum (Social amoeba) protein is Lysosome membrane protein 2-C (lmpC).